The following is a 234-amino-acid chain: LexA repressor (234 aa).

A compositionally biased stretch (basic and acidic residues) spans Met1 to Lys11. A disordered region spans residues Met1 to Arg34. The H-T-H motif DNA-binding region spans Met52 to Met72. Positions Asp83 to Gly94 are enriched in basic and acidic residues. The segment at Asp83 to Lys109 is disordered. The span at Ser95–Asp105 shows a compositional bias: polar residues. Residues Ser158 and Lys195 each act as for autocatalytic cleavage activity in the active site.

It belongs to the peptidase S24 family. As to quaternary structure, homodimer.

The enzyme catalyses Hydrolysis of Ala-|-Gly bond in repressor LexA.. Functionally, represses a number of genes involved in the response to DNA damage (SOS response), including recA and lexA. In the presence of single-stranded DNA, RecA interacts with LexA causing an autocatalytic cleavage which disrupts the DNA-binding part of LexA, leading to derepression of the SOS regulon and eventually DNA repair. This chain is LexA repressor, found in Streptomyces avermitilis (strain ATCC 31267 / DSM 46492 / JCM 5070 / NBRC 14893 / NCIMB 12804 / NRRL 8165 / MA-4680).